We begin with the raw amino-acid sequence, 210 residues long: Ras-related protein Rab-2-B (210 aa).

13–21 (GDTGVGKSC) lines the GTP pocket. The Effector region signature appears at 35–43 (HDLTIGVEF). Residues 61-65 (DTAGQ), 119-122 (NKCD), and 149-151 (SAK) contribute to the GTP site. S-geranylgeranyl cysteine attachment occurs at residues Cys208 and Cys209.

The protein belongs to the small GTPase superfamily. Rab family.

It is found in the endoplasmic reticulum membrane. The protein resides in the golgi apparatus membrane. Protein transport. Probably involved in vesicular traffic. In Zea mays (Maize), this protein is Ras-related protein Rab-2-B (RAB2B).